We begin with the raw amino-acid sequence, 190 residues long: Pyridoxal 5'-phosphate synthase subunit PdxT (190 aa).

L-glutamine is bound at residue 46 to 48 (GES). Catalysis depends on C78, which acts as the Nucleophile. L-glutamine is bound by residues R108 and 137–138 (IR). Catalysis depends on charge relay system residues H174 and E176.

It belongs to the glutaminase PdxT/SNO family. In the presence of PdxS, forms a dodecamer of heterodimers. Only shows activity in the heterodimer.

It catalyses the reaction aldehydo-D-ribose 5-phosphate + D-glyceraldehyde 3-phosphate + L-glutamine = pyridoxal 5'-phosphate + L-glutamate + phosphate + 3 H2O + H(+). It carries out the reaction L-glutamine + H2O = L-glutamate + NH4(+). It functions in the pathway cofactor biosynthesis; pyridoxal 5'-phosphate biosynthesis. Functionally, catalyzes the hydrolysis of glutamine to glutamate and ammonia as part of the biosynthesis of pyridoxal 5'-phosphate. The resulting ammonia molecule is channeled to the active site of PdxS. This is Pyridoxal 5'-phosphate synthase subunit PdxT from Chloroflexus aurantiacus (strain ATCC 29366 / DSM 635 / J-10-fl).